We begin with the raw amino-acid sequence, 310 residues long: ADP-L-glycero-D-manno-heptose-6-epimerase (310 aa).

Residues 10 to 11 (LI), 31 to 32 (DN), Lys-38, Lys-53, 75 to 79 (EGACS), and Asn-92 contribute to the NADP(+) site. Tyr-140 serves as the catalytic Proton acceptor. Lys-144 serves as a coordination point for NADP(+). Asn-169 contributes to the substrate binding site. The NADP(+) site is built by Val-170 and Lys-178. Lys-178 functions as the Proton acceptor in the catalytic mechanism. Residues Ser-180, His-187, 201–204 (FAGS), Arg-209, and Tyr-272 each bind substrate.

The protein belongs to the NAD(P)-dependent epimerase/dehydratase family. HldD subfamily. Homopentamer. NADP(+) serves as cofactor.

It carries out the reaction ADP-D-glycero-beta-D-manno-heptose = ADP-L-glycero-beta-D-manno-heptose. It functions in the pathway nucleotide-sugar biosynthesis; ADP-L-glycero-beta-D-manno-heptose biosynthesis; ADP-L-glycero-beta-D-manno-heptose from D-glycero-beta-D-manno-heptose 7-phosphate: step 4/4. Functionally, catalyzes the interconversion between ADP-D-glycero-beta-D-manno-heptose and ADP-L-glycero-beta-D-manno-heptose via an epimerization at carbon 6 of the heptose. The polypeptide is ADP-L-glycero-D-manno-heptose-6-epimerase (Erwinia tasmaniensis (strain DSM 17950 / CFBP 7177 / CIP 109463 / NCPPB 4357 / Et1/99)).